We begin with the raw amino-acid sequence, 318 residues long: Methionyl-tRNA formyltransferase (318 aa).

Residue 112-115 (SILP) coordinates (6S)-5,6,7,8-tetrahydrofolate.

Belongs to the Fmt family.

The catalysed reaction is L-methionyl-tRNA(fMet) + (6R)-10-formyltetrahydrofolate = N-formyl-L-methionyl-tRNA(fMet) + (6S)-5,6,7,8-tetrahydrofolate + H(+). Its function is as follows. Attaches a formyl group to the free amino group of methionyl-tRNA(fMet). The formyl group appears to play a dual role in the initiator identity of N-formylmethionyl-tRNA by promoting its recognition by IF2 and preventing the misappropriation of this tRNA by the elongation apparatus. This chain is Methionyl-tRNA formyltransferase, found in Haemophilus influenzae (strain ATCC 51907 / DSM 11121 / KW20 / Rd).